A 177-amino-acid polypeptide reads, in one-letter code: Glutathione peroxidase homolog (177 aa).

Residue Cys35 is part of the active site.

This sequence belongs to the glutathione peroxidase family.

Its function is as follows. Important in the cellular metabolism or defense processes particular to this pathogen. In Neisseria meningitidis serogroup A / serotype 4A (strain DSM 15465 / Z2491), this protein is Glutathione peroxidase homolog (gpxA).